We begin with the raw amino-acid sequence, 177 residues long: Protein Flattop (177 aa).

The segment at 113–177 (ILGKPHDPDS…TPGPQRPAKS (65 aa)) is disordered. A compositionally biased stretch (basic and acidic residues) spans 115–124 (GKPHDPDSQK). The segment covering 132–163 (TKTVQQARSPTIIPSSPAANLNSPDELQSSHP) has biased composition (polar residues).

Belongs to the Flattop family. In terms of assembly, microtubule inner protein component of sperm flagellar doublet microtubules. Interacts with DLG3. As to expression, expressed in airway epithelial cells.

The protein resides in the cytoplasm. It localises to the cytoskeleton. It is found in the cilium basal body. The protein localises to the cell projection. Its subcellular location is the cilium. The protein resides in the apical cell membrane. It localises to the cilium axoneme. It is found in the flagellum axoneme. Microtubule inner protein (MIP) part of the dynein-decorated doublet microtubules (DMTs) in cilia axoneme. Acts as a regulator of cilium basal body docking and positioning in mono- and multiciliated cells. Regulates basal body docking and cilia formation in multiciliated lung cells. Regulates kinocilium positioning and stereocilia bundle morphogenesis in the inner ear. In Homo sapiens (Human), this protein is Protein Flattop.